We begin with the raw amino-acid sequence, 148 residues long: Lysozyme C (148 aa).

The first 18 residues, 1–18 (MKALIVLGLVLLSVMVQG), serve as a signal peptide directing secretion. A C-type lysozyme domain is found at 19–148 (KVFERCELAR…VRQYVQGCGV (130 aa)). 4 disulfides stabilise this stretch: C24–C146, C48–C134, C83–C99, and C95–C113. Active-site residues include E53 and D71.

The protein belongs to the glycosyl hydrolase 22 family. As to quaternary structure, monomer.

The catalysed reaction is Hydrolysis of (1-&gt;4)-beta-linkages between N-acetylmuramic acid and N-acetyl-D-glucosamine residues in a peptidoglycan and between N-acetyl-D-glucosamine residues in chitodextrins.. Lysozymes have primarily a bacteriolytic function; those in tissues and body fluids are associated with the monocyte-macrophage system and enhance the activity of immunoagents. The protein is Lysozyme C (LYZ) of Gorilla gorilla gorilla (Western lowland gorilla).